Here is a 338-residue protein sequence, read N- to C-terminus: Endonuclease V (338 aa).

Residues Asp-52 and Asp-126 each coordinate Mg(2+). The disordered stretch occupies residues 253–338 (QLGVAPAQRK…PSPAWVQSPP (86 aa)). Composition is skewed to basic and acidic residues over residues 260 to 270 (QRKDRSQKEQR) and 287 to 323 (RPPE…HQED). A compositionally biased stretch (pro residues) spans 328 to 338 (PPSPAWVQSPP).

It belongs to the endonuclease V family. In terms of assembly, monomer. Interacts with PABPC1; the interaction is RNA-dependent and stimulates ENDOV activity. Requires Mg(2+) as cofactor. Highest levels detected in liver with high levels also found in heart, kidney and testis. Expressed at low levels in brain.

It is found in the cytoplasm. The protein localises to the nucleus. The protein resides in the nucleolus. Its subcellular location is the stress granule. Its function is as follows. Endoribonuclease that specifically cleaves inosine-containing RNAs: cleaves RNA at the second phosphodiester bond 3' to inosine. Active against both single-stranded and double-stranded RNAs. Has strong preference for single-stranded RNAs (ssRNAs) toward double-stranded RNAs (dsRNAs). Cleaves mRNAs and tRNAs containing inosine. Also able to cleave structure-specific dsRNA substrates containing the specific sites 5'-IIUI-3' and 5'-UIUU-3'. Inosine is present in a number of RNAs following editing; the function of inosine-specific endoribonuclease is still unclear: it could either play a regulatory role in edited RNAs, or be involved in antiviral response by removing the hyperedited long viral dsRNA genome that has undergone A-to-I editing. Binds branched DNA structures. The polypeptide is Endonuclease V (Endov) (Mus musculus (Mouse)).